The primary structure comprises 631 residues: Phosphomethylpyrimidine synthase (631 aa).

Substrate contacts are provided by residues N239, M268, Y297, H333, 353-355 (SRG), 394-397 (DGLR), and E433. A Zn(2+)-binding site is contributed by H437. Substrate is bound at residue Y460. A Zn(2+)-binding site is contributed by H501. Residues C581, C584, and C589 each coordinate [4Fe-4S] cluster.

It belongs to the ThiC family. In terms of assembly, homodimer. [4Fe-4S] cluster serves as cofactor.

The enzyme catalyses 5-amino-1-(5-phospho-beta-D-ribosyl)imidazole + S-adenosyl-L-methionine = 4-amino-2-methyl-5-(phosphooxymethyl)pyrimidine + CO + 5'-deoxyadenosine + formate + L-methionine + 3 H(+). The protein operates within cofactor biosynthesis; thiamine diphosphate biosynthesis. Catalyzes the synthesis of the hydroxymethylpyrimidine phosphate (HMP-P) moiety of thiamine from aminoimidazole ribotide (AIR) in a radical S-adenosyl-L-methionine (SAM)-dependent reaction. In Escherichia coli O157:H7, this protein is Phosphomethylpyrimidine synthase.